The primary structure comprises 392 residues: Glutamine synthetase (392 aa).

Positions Val26–Arg106 constitute a GS beta-grasp domain. The GS catalytic domain occupies Leu113–Phe392. Residue Glu134 coordinates ATP. Mn(2+) is bound by residues Glu134, Glu136, Glu196, and Glu203. Glu203 to Pro208 serves as a coordination point for ATP. An L-glutamate-binding site is contributed by Asn246–Trp247. Residue His253 participates in Mn(2+) binding. Residues Asn255–Ser257, Arg319, and Arg324 each bind ATP. Arg319 contributes to the L-glutamate binding site. Tyr336–Glu338 is an ADP binding site. Residue Glu338 participates in Mn(2+) binding. Arg340 is an L-glutamate binding site.

It belongs to the glutamine synthetase family. Requires Mg(2+) as cofactor. It depends on Mn(2+) as a cofactor.

The protein resides in the cytoplasm. It localises to the cytosol. The protein localises to the microsome. It is found in the mitochondrion. It carries out the reaction L-glutamate + NH4(+) + ATP = L-glutamine + ADP + phosphate + H(+). In terms of biological role, glutamine synthetase that catalyzes the ATP-dependent conversion of glutamate and ammonia to glutamine. The protein is Glutamine synthetase of Xenopus laevis (African clawed frog).